The chain runs to 447 residues: N-succinylarginine dihydrolase (447 aa).

Substrate contacts are provided by residues 19–28 (AGLSFGNEAS), Asn-110, and 137–138 (HR). Glu-174 is a catalytic residue. Arg-212 contacts substrate. Residue His-248 is part of the active site. The substrate site is built by Asp-250 and Asn-359. The Nucleophile role is filled by Cys-365.

The protein belongs to the succinylarginine dihydrolase family. As to quaternary structure, homodimer.

It carries out the reaction N(2)-succinyl-L-arginine + 2 H2O + 2 H(+) = N(2)-succinyl-L-ornithine + 2 NH4(+) + CO2. It functions in the pathway amino-acid degradation; L-arginine degradation via AST pathway; L-glutamate and succinate from L-arginine: step 2/5. Catalyzes the hydrolysis of N(2)-succinylarginine into N(2)-succinylornithine, ammonia and CO(2). This is N-succinylarginine dihydrolase from Salmonella enteritidis PT4 (strain P125109).